The primary structure comprises 356 residues: Popeye domain-containing protein 1 (356 aa).

At M1–A48 the chain is on the extracellular side. N2 and N30 each carry an N-linked (GlcNAc...) asparagine glycan. A helical transmembrane segment spans residues N49–L69. Position 70 (R70) is a topological domain, cytoplasmic. The helical transmembrane segment at V71 to L91 threads the bilayer. Position 92 (D92) is a topological domain, extracellular. A helical membrane pass occupies residues M93–Y113. Residues M93–K115 form a required for interaction with CAV3 region. Residues K114 to P356 are Cytoplasmic-facing. The tract at residues R136 to R186 is required for interaction with KCNK2. Phosphoserine is present on residues S295 and S318. Residues S313–S323 show a composition bias toward low complexity. A disordered region spans residues S313–P356.

The protein belongs to the popeye family. Homodimer. Homodimerization requires the C-terminus cytoplasmic region. Interacts (via the C-terminus cytoplasmic tail) with TJP1. Interacts (via the C-terminus cytoplasmic tail) with ARHGEF25/GEFT (via the DH domain). Interacts (via the C-terminus cytoplasmic tail) with VAMP3. Interacts with KCNK2; the interaction enhances KCNK2 surface expression and is inhibited by cAMP. Interacts with CAV3. In terms of tissue distribution, strongly expressed in heart and skeletal muscle. Weakly expressed in brain, spleen, liver, kidney and lung.

The protein resides in the lateral cell membrane. It is found in the cell junction. It localises to the tight junction. Its subcellular location is the membrane. The protein localises to the cell membrane. The protein resides in the sarcolemma. It is found in the caveola. Functionally, cell adhesion molecule involved in the establishment and/or maintenance of cell integrity. Involved in the formation and regulation of the tight junction (TJ) paracellular permeability barrier in epithelial cells. Plays a role in VAMP3-mediated vesicular transport and recycling of different receptor molecules through its interaction with VAMP3. Plays a role in the regulation of cell shape and movement by modulating the Rho-family GTPase activity through its interaction with ARHGEF25/GEFT. Induces primordial adhesive contact and aggregation of epithelial cells in a Ca(2+)-independent manner. Important for skeletal muscle and heart development. Also involved in striated muscle regeneration and repair and in the regulation of cell spreading. Important for the maintenance of cardiac function. Plays a regulatory function in heart rate dynamics mediated, at least in part, through cAMP-binding and, probably, by increasing cell surface expression of the potassium channel KCNK2 and enhancing current density. Is a caveolae-associated protein important for the preservation of caveolae structural and functional integrity as well as for heart protection against ischemia injury. The sequence is that of Popeye domain-containing protein 1 (Popdc1) from Rattus norvegicus (Rat).